Consider the following 368-residue polypeptide: tRNA-specific 2-thiouridylase MnmA (368 aa).

Residues glycine 11–serine 18 and methionine 37 contribute to the ATP site. The interval asparagine 97–aspartate 99 is interaction with target base in tRNA. Cysteine 102 (nucleophile) is an active-site residue. A disulfide bridge links cysteine 102 with cysteine 199. An ATP-binding site is contributed by glycine 127. The interval lysine 149 to glutamine 151 is interaction with tRNA. Residue cysteine 199 is the Cysteine persulfide intermediate of the active site. The interval arginine 311–tyrosine 312 is interaction with tRNA.

Belongs to the MnmA/TRMU family. As to quaternary structure, interacts with TusE.

It is found in the cytoplasm. The catalysed reaction is S-sulfanyl-L-cysteinyl-[protein] + uridine(34) in tRNA + AH2 + ATP = 2-thiouridine(34) in tRNA + L-cysteinyl-[protein] + A + AMP + diphosphate + H(+). Its function is as follows. Catalyzes the 2-thiolation of uridine at the wobble position (U34) of tRNA(Lys), tRNA(Glu) and tRNA(Gln), leading to the formation of s(2)U34, the first step of tRNA-mnm(5)s(2)U34 synthesis. Sulfur is provided by IscS, via a sulfur-relay system. Binds ATP and its substrate tRNAs. In Salmonella paratyphi B (strain ATCC BAA-1250 / SPB7), this protein is tRNA-specific 2-thiouridylase MnmA.